Consider the following 400-residue polypeptide: Formate-dependent phosphoribosylglycinamide formyltransferase (400 aa).

N(1)-(5-phospho-beta-D-ribosyl)glycinamide is bound by residues E22 to L23 and E82. Residues R114, K155, S160 to Q165, E195 to V198, and E203 each bind ATP. Residues R119–L308 form the ATP-grasp domain. Mg(2+) is bound by residues E267 and E279. Residues D286, K356, and R363 to R364 contribute to the N(1)-(5-phospho-beta-D-ribosyl)glycinamide site.

This sequence belongs to the PurK/PurT family. As to quaternary structure, homodimer.

The catalysed reaction is N(1)-(5-phospho-beta-D-ribosyl)glycinamide + formate + ATP = N(2)-formyl-N(1)-(5-phospho-beta-D-ribosyl)glycinamide + ADP + phosphate + H(+). The protein operates within purine metabolism; IMP biosynthesis via de novo pathway; N(2)-formyl-N(1)-(5-phospho-D-ribosyl)glycinamide from N(1)-(5-phospho-D-ribosyl)glycinamide (formate route): step 1/1. Functionally, involved in the de novo purine biosynthesis. Catalyzes the transfer of formate to 5-phospho-ribosyl-glycinamide (GAR), producing 5-phospho-ribosyl-N-formylglycinamide (FGAR). Formate is provided by PurU via hydrolysis of 10-formyl-tetrahydrofolate. This is Formate-dependent phosphoribosylglycinamide formyltransferase from Hahella chejuensis (strain KCTC 2396).